The primary structure comprises 90 residues: Hypnin-A3 (90 aa).

In terms of biological role, lectin specific for core(alpha 1-6)fucosylated N-glycans. Inhibits platelet aggregation. This Hypnea japonica (Japanese red alga) protein is Hypnin-A3.